Consider the following 102-residue polypeptide: uncharacterized protein (102 aa).

The protein belongs to the Gram-positive plasmids replication protein type 2 family.

This is an uncharacterized protein from Staphylococcus aureus.